A 335-amino-acid chain; its full sequence is Calcium/calmodulin-dependent protein kinase type I (335 aa).

The Protein kinase domain occupies 31–291 (YRVGRVLGGG…AADALKHPFL (261 aa)). 37–45 (LGGGTYATV) is a binding site for ATP. Asp154 functions as the Proton acceptor in the catalytic mechanism. Residue Thr192 is modified to Phosphothreonine; by autocatalysis. Residues 310–334 (NARKTFRTAYNAVRAFNTWKKLENK) form a calmodulin-binding region.

This sequence belongs to the protein kinase superfamily. CAMK Ser/Thr protein kinase family. CaMK subfamily.

The protein resides in the cytoplasm. The enzyme catalyses L-seryl-[protein] + ATP = O-phospho-L-seryl-[protein] + ADP + H(+). It catalyses the reaction L-threonyl-[protein] + ATP = O-phospho-L-threonyl-[protein] + ADP + H(+). In terms of biological role, important in cell cycle regulation. The sequence is that of Calcium/calmodulin-dependent protein kinase type I (cmk1) from Schizosaccharomyces pombe (strain 972 / ATCC 24843) (Fission yeast).